The sequence spans 379 residues: ATP phosphoribosyltransferase regulatory subunit (379 aa).

It belongs to the class-II aminoacyl-tRNA synthetase family. HisZ subfamily. In terms of assembly, heteromultimer composed of HisG and HisZ subunits.

It localises to the cytoplasm. It functions in the pathway amino-acid biosynthesis; L-histidine biosynthesis; L-histidine from 5-phospho-alpha-D-ribose 1-diphosphate: step 1/9. Its function is as follows. Required for the first step of histidine biosynthesis. May allow the feedback regulation of ATP phosphoribosyltransferase activity by histidine. The chain is ATP phosphoribosyltransferase regulatory subunit from Caldanaerobacter subterraneus subsp. tengcongensis (strain DSM 15242 / JCM 11007 / NBRC 100824 / MB4) (Thermoanaerobacter tengcongensis).